A 165-amino-acid polypeptide reads, in one-letter code: Neuritin-like protein (165 aa).

The first 35 residues, 1-35, serve as a signal peptide directing secretion; it reads MMRCCRRRCCCRQPPHALRPLLLLPLVLLPPLAAA. Ala-139 carries the GPI-anchor amidated alanine lipid modification. A propeptide spans 140–165 (removed in mature form); sequence PALPMAPAPPLLAAALALAYLLRPLA.

The protein belongs to the neuritin family.

Its subcellular location is the cell membrane. The chain is Neuritin-like protein (NRN1L) from Homo sapiens (Human).